We begin with the raw amino-acid sequence, 745 residues long: Ankyrin repeat and protein kinase domain-containing protein 1 (745 aa).

A Protein kinase domain is found at 34-301; sequence EEEWHLVASG…NVAVETDMLL (268 aa). ATP-binding positions include 40 to 48 and lysine 63; that span reads VASGGFSKV. Aspartate 157 functions as the Proton acceptor in the catalytic mechanism. ANK repeat units follow at residues 369–398, 402–431, 435–464, 468–497, 501–530, 534–563, 567–596, 600–629, 633–662, 666–695, and 699–728; these read NRVT…DVDC, SGYT…DTNL, DGWA…LVNA, EGWT…DLSP, EGKT…ELDA, NLRT…LPDA, SGYS…SLEL, QGWT…DLDA, MQWT…NPNA, SGWT…DIHA, and VGWT…QVDV.

This sequence belongs to the protein kinase superfamily. TKL Ser/Thr protein kinase family.

The catalysed reaction is L-seryl-[protein] + ATP = O-phospho-L-seryl-[protein] + ADP + H(+). It catalyses the reaction L-threonyl-[protein] + ATP = O-phospho-L-threonyl-[protein] + ADP + H(+). In Mus musculus (Mouse), this protein is Ankyrin repeat and protein kinase domain-containing protein 1 (Ankk1).